The chain runs to 338 residues: Replication factor C small subunit (338 aa).

Position 53 to 60 (53 to 60 (GPPGVGKT)) interacts with ATP.

The protein belongs to the activator 1 small subunits family. RfcS subfamily. As to quaternary structure, heteromultimer composed of small subunits (RfcS) and large subunits (RfcL).

In terms of biological role, part of the RFC clamp loader complex which loads the PCNA sliding clamp onto DNA. This chain is Replication factor C small subunit, found in Methanosarcina mazei (strain ATCC BAA-159 / DSM 3647 / Goe1 / Go1 / JCM 11833 / OCM 88) (Methanosarcina frisia).